The primary structure comprises 244 residues: Small ribosomal subunit protein uS2 (244 aa).

This sequence belongs to the universal ribosomal protein uS2 family.

In Buchnera aphidicola subsp. Schizaphis graminum (strain Sg), this protein is Small ribosomal subunit protein uS2.